Reading from the N-terminus, the 512-residue chain is MLQQADGVSPDRSSCDTPAPRTFEVRTYGCQMNVHDSERLSGLLEQAGYQRAGAGVDADIVVFNTCAVRENADNKLYGNLSHLAPRKQADPQMQIAVGGCLAQKDRDAVLRKAPWVDVVFGTHNIGSLPTLLDRARHNRVAQVEIAESLREFPSALPASRESAYAAWVSISVGCNNTCTFCIVPSLRGKEVDRRPGDVLAEVQALVDQGVLEITLLGQNVNAYGVSFADPTEARDRGAFAKLLRACGRIDGLERVRFTSPHPAEFTDDVIEAMAQTSNVCPTLHMPLQSGSDRILRAMRRSYRADRYLGIIDRVRTAIPHAAITTDLIVGFPGETEEDFQATLDVVEAARFSSAFTFQYSKRPGTPAAELEGQIPKAVVSERYQRLIELQERISWEENRAQIGREVELLVATGEGRKDAATARMSGRARDGRLVHFAPGALGADIRPGDIVVTTVTGAAPHHLIADAGPAEHRRTRAGDAHAEGRTPKTGVGLGMPGIGAPEPAPVTQGCAL.

The tract at residues 1-20 is disordered; that stretch reads MLQQADGVSPDRSSCDTPAP. The MTTase N-terminal domain occupies 21–137; the sequence is RTFEVRTYGC…LPTLLDRARH (117 aa). Residues Cys-30, Cys-66, Cys-100, Cys-174, Cys-178, and Cys-181 each contribute to the [4Fe-4S] cluster site. The 238-residue stretch at 160–397 folds into the Radical SAM core domain; sequence RESAYAAWVS…ELQERISWEE (238 aa). In terms of domain architecture, TRAM spans 399 to 469; that stretch reads RAQIGREVEL…PHHLIADAGP (71 aa). Basic and acidic residues predominate over residues 470 to 486; the sequence is AEHRRTRAGDAHAEGRT. The tract at residues 470–512 is disordered; the sequence is AEHRRTRAGDAHAEGRTPKTGVGLGMPGIGAPEPAPVTQGCAL.

This sequence belongs to the methylthiotransferase family. MiaB subfamily. Monomer. [4Fe-4S] cluster is required as a cofactor.

The protein resides in the cytoplasm. The enzyme catalyses N(6)-dimethylallyladenosine(37) in tRNA + (sulfur carrier)-SH + AH2 + 2 S-adenosyl-L-methionine = 2-methylsulfanyl-N(6)-dimethylallyladenosine(37) in tRNA + (sulfur carrier)-H + 5'-deoxyadenosine + L-methionine + A + S-adenosyl-L-homocysteine + 2 H(+). In terms of biological role, catalyzes the methylthiolation of N6-(dimethylallyl)adenosine (i(6)A), leading to the formation of 2-methylthio-N6-(dimethylallyl)adenosine (ms(2)i(6)A) at position 37 in tRNAs that read codons beginning with uridine. This Mycolicibacterium gilvum (strain PYR-GCK) (Mycobacterium gilvum (strain PYR-GCK)) protein is tRNA-2-methylthio-N(6)-dimethylallyladenosine synthase.